A 181-amino-acid chain; its full sequence is Small ribosomal subunit protein uS4 (181 aa).

Positions 104-172 (RRLQTIVYKK…SRPPVMSQQE (69 aa)) constitute an S4 RNA-binding domain.

This sequence belongs to the universal ribosomal protein uS4 family. As to quaternary structure, part of the 30S ribosomal subunit. Contacts protein S5. The interaction surface between S4 and S5 is involved in control of translational fidelity.

One of the primary rRNA binding proteins, it binds directly to 16S rRNA where it nucleates assembly of the body of the 30S subunit. Its function is as follows. With S5 and S12 plays an important role in translational accuracy. The chain is Small ribosomal subunit protein uS4 from Saccharolobus solfataricus (strain ATCC 35092 / DSM 1617 / JCM 11322 / P2) (Sulfolobus solfataricus).